Here is a 221-residue protein sequence, read N- to C-terminus: UPF0502 protein XOO0224 (221 aa).

This sequence belongs to the UPF0502 family.

The sequence is that of UPF0502 protein XOO0224 from Xanthomonas oryzae pv. oryzae (strain MAFF 311018).